The chain runs to 218 residues: MRLILLGAPGAGKGTQAQFICERFDIPQISTGDMLRAAVKEGSELGLKVKEIMNSGGLVSDDIIIALVKERIAQPDCANGFLFDGFPRTIPQADAMKEANVKLDHVLEVAVDDEEIVTRLAGRRVHPGSGRVYHVDYNPPKEEGKDDVTGEALIQRDDDREATVRNRLSVYHEQTEPLVQYYREWAQQDPQTAPAYHRVEGTGSVEAIRQQVLTALEG.

Gly10–Thr15 serves as a coordination point for ATP. The tract at residues Ser30–Val59 is NMP. AMP-binding positions include Thr31, Arg36, Gly57–Val59, Gly85–Arg88, and Gln92. The tract at residues Gly122–Asp159 is LID. Residues Arg123 and Val132–Tyr133 each bind ATP. 2 residues coordinate AMP: Arg156 and Arg167. Gly203 serves as a coordination point for ATP.

The protein belongs to the adenylate kinase family. As to quaternary structure, monomer.

It localises to the cytoplasm. It carries out the reaction AMP + ATP = 2 ADP. Its pathway is purine metabolism; AMP biosynthesis via salvage pathway; AMP from ADP: step 1/1. Catalyzes the reversible transfer of the terminal phosphate group between ATP and AMP. Plays an important role in cellular energy homeostasis and in adenine nucleotide metabolism. The sequence is that of Adenylate kinase from Chromohalobacter salexigens (strain ATCC BAA-138 / DSM 3043 / CIP 106854 / NCIMB 13768 / 1H11).